Reading from the N-terminus, the 1182-residue chain is MTGQLVQYGRHRQRRSFARISEVLELPNLIEIQTASYEWFLREGLKEMFTDISPISDFTGNLVLEFIDYSLSEPKYSIDESKERDVTYSAPLRVKVRLQNKETGELKEQEVFMGDFPLMTESGTFIINGAERVIVSQLVRSPSVYYNAKLDKNGKRGFGATVIPNRGAWLELETDAKDIVYVRIDRTRKIPVTVLLRALGFGTDQEIIDLLGDDEYLRNTLEKDNTESTEKALIEIYERLRPGEPPTVENAKSLLVSRFFDPKRYDLANVGRYKMNKKLHLKNRLFGQKLAETLVDPETGEVLAEAGTILDRRNLDRILPHLENGLGYIDAEPTGGVAEGEPFGLQSIKVISPDDPDGERILNIIGNGNIDRSVKHITPADIIASINYFFNLLHEVGTTDDIDHLGNRRLRSVGELLQNQFRIGLSRMERVVKERMSIQDQNAITPQALINIRPVIASLKEFFGSSQLSQFMDQTNPLAELTHKRRLSALGPGGLTRERAGFEVRDVHYSHYGRMCPIETPEGPNIGLINSLSSYAKVNEYGFIEAPYRRVDPETGLVTGDIQYMTADEEDLYVVAQANMPLTEDGHFADEQVLCRFRGQNLSVEPSRVDYMDVSPKQVVSAATACIPFLENDDSNRALMGANMQRQAVPLLQPDSPIVGTGMEYVSAKDSGAAIVAKHPGVVERVTAREILIRRTSDVNGSEVSGDLDRYKLQKYVRSNQGTCYNQKPIIAAGDRVEKGEILADGPSMDMGELALGRNVVVAFMTWDGYNYEDAIIMSERLVKDDVYTSIHIEEYESESRDTKLGPEEITRDIPNVGDDALRNLDDRGIIRIGAEVKDGDILVGKVTPKGVTELTAEERLLHAIFGEKAREVRDTSLRVPNGGDGIILDVKVFDRENGDELSPGVNQMVRVYIVQKRKIHEGDKMAGRHGNKGVISRILPEEDMPYMPDGTPVDIMLNPLGVPSRMNIGQVLELHLGMAAKKLGIKVATPVFDGAREEDVWATIEEAGMDKDAKTRLYDGRTGEPFDNRVSVGVMYMIKLAHMVDDKLHARSTGPYSLVTQQPLGGKAQFGGQRFGEMEVWALEAYGAAYTLQEILTIKSDDTVGRVKAYEAIVKGESVPKAGVPESFRVLIKELQALGMEVKMMSADDEEVEMKDEDDDNIPNATSALEQVVQPTVTEEE.

Positions 1150-1162 (DEEVEMKDEDDDN) are enriched in acidic residues. The tract at residues 1150-1182 (DEEVEMKDEDDDNIPNATSALEQVVQPTVTEEE) is disordered. The span at 1171–1182 (EQVVQPTVTEEE) shows a compositional bias: low complexity.

The protein belongs to the RNA polymerase beta chain family. The RNAP catalytic core consists of 2 alpha, 1 beta, 1 beta' and 1 omega subunit. When a sigma factor is associated with the core the holoenzyme is formed, which can initiate transcription.

It carries out the reaction RNA(n) + a ribonucleoside 5'-triphosphate = RNA(n+1) + diphosphate. In terms of biological role, DNA-dependent RNA polymerase catalyzes the transcription of DNA into RNA using the four ribonucleoside triphosphates as substrates. This Exiguobacterium sp. (strain ATCC BAA-1283 / AT1b) protein is DNA-directed RNA polymerase subunit beta.